The primary structure comprises 145 residues: Fatty acid-binding protein homolog 4 (145 aa).

Belongs to the calycin superfamily. Fatty-acid binding protein (FABP) family.

The chain is Fatty acid-binding protein homolog 4 (lbp-4) from Caenorhabditis elegans.